The sequence spans 312 residues: MAVAMTPAAADELHTIVDLIRYGASRFSEAGLTFGHSYDNALDEATQLVLHALHLPPDLGPAYGQARLLRTEKECVLALFERRVTERVPVAYLTGDAWFAGLNFKSDARALVPRSPIAELIQAGFEPWLAGRDVRHALDLCTGSGCIAIAMGHYNPHWRVDGSDISEDALSLALENKVRLLAHNVELIKSDVFAGLVGRRYQLIVSNPPYVTDAETDALPQEYGYEPELGLRAGPDGLNLVLKILRDAPAHLDEEGLLICEVGESEQQLVQLLPQVDFAWVEFKVGQMGVFAVECRELIAHHDRIAALAAER.

This sequence belongs to the protein N5-glutamine methyltransferase family. PrmB subfamily.

The enzyme catalyses L-glutaminyl-[ribosomal protein uL3] + S-adenosyl-L-methionine = N(5)-methyl-L-glutaminyl-[ribosomal protein uL3] + S-adenosyl-L-homocysteine + H(+). Its function is as follows. Methylates large ribosomal subunit protein uL3 on a specific glutamine residue. The sequence is that of Ribosomal protein uL3 glutamine methyltransferase from Xylella fastidiosa (strain Temecula1 / ATCC 700964).